The following is an 854-amino-acid chain: DNA mismatch repair protein MutS (854 aa).

The tract at residues 1–21 (MTASDIQPTEPHTPPTPHADT) is disordered. Position 658–665 (658–665 (GPNASGKS)) interacts with ATP.

It belongs to the DNA mismatch repair MutS family.

Functionally, this protein is involved in the repair of mismatches in DNA. It is possible that it carries out the mismatch recognition step. This protein has a weak ATPase activity. The chain is DNA mismatch repair protein MutS from Trichormus variabilis (strain ATCC 29413 / PCC 7937) (Anabaena variabilis).